The primary structure comprises 468 residues: Putative ankyrin repeat protein R580 (468 aa).

6 ANK repeats span residues 12–41, 189–218, 249–278, 336–365, 367–393, and 394–423; these read DYFD…TLID, VINK…EINC, CHFD…KINS, SFDN…NINF, NMPT…DLEI, and HGTL…KFSL.

This Acanthamoeba polyphaga (Amoeba) protein is Putative ankyrin repeat protein R580.